The following is a 280-amino-acid chain: Polyamine aminopropyltransferase (280 aa).

In terms of domain architecture, PABS spans 2-235; sequence GGWIDEEHRG…GWWSWTFAAV (234 aa). S-methyl-5'-thioadenosine is bound at residue glutamine 29. Positions 60 and 84 each coordinate spermidine. S-methyl-5'-thioadenosine-binding positions include glutamate 104 and 136-137; that span reads DG. Aspartate 155 functions as the Proton acceptor in the catalytic mechanism. S-methyl-5'-thioadenosine is bound at residue proline 162.

Belongs to the spermidine/spermine synthase family. Homodimer or homotetramer.

The protein resides in the cytoplasm. It carries out the reaction S-adenosyl 3-(methylsulfanyl)propylamine + putrescine = S-methyl-5'-thioadenosine + spermidine + H(+). It functions in the pathway amine and polyamine biosynthesis; spermidine biosynthesis; spermidine from putrescine: step 1/1. In terms of biological role, catalyzes the irreversible transfer of a propylamine group from the amino donor S-adenosylmethioninamine (decarboxy-AdoMet) to putrescine (1,4-diaminobutane) to yield spermidine. The sequence is that of Polyamine aminopropyltransferase from Parasynechococcus marenigrum (strain WH8102).